We begin with the raw amino-acid sequence, 632 residues long: Polygalacturonase non-catalytic subunit AroGP3 (632 aa).

The first 27 residues, 1-27 (MHTKILLPSCILLLLLFTLSSLDVVVA), serve as a signal peptide directing secretion. Positions 28–109 (KDGDESGNPF…MCALDLLPSL (82 aa)) are excised as a propeptide. N-linked (GlcNAc...) asparagine glycans are attached at residues asparagine 125, asparagine 143, asparagine 258, asparagine 280, asparagine 336, asparagine 371, and asparagine 389. Positions 417-631 (FFREKMLKSG…FENDMTWATA (215 aa)) constitute a BURP domain.

In terms of assembly, interacts with polygalacturonase to form heterodimers.

Its subcellular location is the secreted. The protein resides in the extracellular space. It localises to the apoplast. It is found in the cell wall. In terms of biological role, non-catalytic subunit of polygalacturonase. The chain is Polygalacturonase non-catalytic subunit AroGP3 (GP3) from Solanum lycopersicum (Tomato).